The sequence spans 347 residues: GMP reductase (347 aa).

108-131 contacts NADP(+); the sequence is ADFEKTKQILDLNPALNFVCIDVA. Positions 181 and 183 each coordinate K(+). Cys-186 acts as the Thioimidate intermediate in catalysis. Residue 216 to 239 coordinates NADP(+); that stretch reads IVSDGGCTTPGDVAKAFGGGADFV.

Belongs to the IMPDH/GMPR family. GuaC type 1 subfamily. As to quaternary structure, homotetramer.

It carries out the reaction IMP + NH4(+) + NADP(+) = GMP + NADPH + 2 H(+). Its function is as follows. Catalyzes the irreversible NADPH-dependent deamination of GMP to IMP. It functions in the conversion of nucleobase, nucleoside and nucleotide derivatives of G to A nucleotides, and in maintaining the intracellular balance of A and G nucleotides. This is GMP reductase from Shigella boydii serotype 18 (strain CDC 3083-94 / BS512).